The primary structure comprises 749 residues: MRITFFASLLLFTNTIFISFSFAIAGINKESPLSIGQTLSSSNGVYELGFFSFNNSENHYLGIWFKGIIPRVVVWVANRENPVTDSTANLAISSNASLLLYNGKHGVAWSSGETLASNGSRAELSDTGNLIVIDNFSGRTLWQSFDHLGDTMLPFSALMYNLATGEKQVLTSWKSYTNPAVGDFVLQITTQVPTQALTMRGSKPYWRSGPWAKTRNFKLPRIVITSKGSLEISRHSGTDWVLNFVAPAHSCDYYGVCGPFGICVKSVCKCFKGFIPKYIEEWKRGNWTDGCVRRTKLHCQENSTKKDANFFHPVANIKPPDFYEFASAVDAEGCYKICLHNCSCLAFSYIHGIGCLIWNQDFMDTVQFSAGGEILSIRLARSELGGNKRKKTITASIVSLSLFLILGSTAFGFWRYRVKHNASQDAPKYDLEPQDVSGSYLFEMNTIQTATNNFSLSNKLGQGGFGSVYKGKLQDGKEIAVKRLSSSSGQGKEEFMNEIVLISKLQHKNLVRILGCCIEGEERLLIYEFMLNKSLDTFLFDSRKRLEIDWPKRFDIIQGIARGIHYLHRDSCLKVIHRDLKVSNILLDEKMNPKISDFGLARMYQGTEYQDNTRRVVGTLGYMSPEDILEIISGEKISRFSYGKEEKTLIAYAWESWCETGGVDLLDKDVADSCRPLEVERCIQIGLLCVQHQPADRPNTLELMSMLTTTSDLPSPKQPTFVVHWRDDESSSKDLITVNEMTKSVILGR.

A signal peptide spans 1–25 (MRITFFASLLLFTNTIFISFSFAIA). The Bulb-type lectin domain maps to 26–145 (GINKESPLSI…FSGRTLWQSF (120 aa)). Residues 26-392 (GINKESPLSI…ELGGNKRKKT (367 aa)) are Extracellular-facing. Residues Asn54, Asn95, Asn118, and Asn135 are each glycosylated (N-linked (GlcNAc...) asparagine). In terms of domain architecture, EGF-like; atypical spans 247-280 (PAHSCDYYGVCGPFGICVKSVCKCFKGFIPKYIE). Disulfide bonds link Cys251-Cys263 and Cys257-Cys268. Residues Asn286, Asn302, and Asn341 are each glycosylated (N-linked (GlcNAc...) asparagine). The PAN domain maps to 299-381 (CQENSTKKDA…GEILSIRLAR (83 aa)). Disulfide bonds link Cys334-Cys355 and Cys338-Cys344. A helical membrane pass occupies residues 393–413 (ITASIVSLSLFLILGSTAFGF). Residues 414 to 749 (WRYRVKHNAS…EMTKSVILGR (336 aa)) are Cytoplasmic-facing. Residues 454–721 (FSLSNKLGQG…DLPSPKQPTF (268 aa)) enclose the Protein kinase domain. ATP is bound by residues 460-468 (LGQGGFGSV) and Lys482. The interval 543–560 (RKRLEIDWPKRFDIIQGI) is caM-binding. Asp579 serves as the catalytic Proton acceptor.

Belongs to the protein kinase superfamily. Ser/Thr protein kinase family.

The protein resides in the cell membrane. The enzyme catalyses L-seryl-[protein] + ATP = O-phospho-L-seryl-[protein] + ADP + H(+). It catalyses the reaction L-threonyl-[protein] + ATP = O-phospho-L-threonyl-[protein] + ADP + H(+). This is G-type lectin S-receptor-like serine/threonine-protein kinase At1g61460 from Arabidopsis thaliana (Mouse-ear cress).